Consider the following 96-residue polypeptide: Bublin coiled-coil protein (96 aa).

The stretch at 39–79 (NSCLDDIEDRNDALNGKLHELLESNRQARKDFRQQLNDEEA) forms a coiled coil. The disordered stretch occupies residues 63–96 (NRQARKDFRQQLNDEEASPPPAEDPASRDTQTED). The span at 87–96 (PASRDTQTED) shows a compositional bias: basic and acidic residues.

This sequence belongs to the UPF0184 (EST00098) family.

It is found in the cell junction. The protein resides in the cytoplasm. The protein localises to the cytoskeleton. Functionally, essential for intermediate filament organization in intestinal cells, interacts with intermediate filament and regulates intestinal lumen morphology. This Ctenopharyngodon idella (Grass carp) protein is Bublin coiled-coil protein (bbln).